A 138-amino-acid polypeptide reads, in one-letter code: Putative pre-16S rRNA nuclease (138 aa).

It belongs to the YqgF nuclease family.

It localises to the cytoplasm. Functionally, could be a nuclease involved in processing of the 5'-end of pre-16S rRNA. In Salmonella dublin (strain CT_02021853), this protein is Putative pre-16S rRNA nuclease.